The following is a 181-amino-acid chain: MCKGLAALPHSCLERAKEIKIKLGILLQKPDSAVDLVIPYNEKPEKPAKAHKPSLEEVLQWRQSLDKLLQNSYGFASFKSFLKSEFSEENLEFWVACENYKKIKSPIKMAEKAKQIYEEFIQTEAPKEVNIDHFTKDITMKNLVEPSPRSFDLAQKRIYALMEKDSLPRFVRSEFYKELIK.

The RGS domain maps to 64–180 (SLDKLLQNSY…VRSEFYKELI (117 aa)).

Expressed in heart and muscle.

It is found in the cytoplasm. Its subcellular location is the membrane. Its function is as follows. Inhibits signal transduction by increasing the GTPase activity of G protein alpha subunits thereby driving them into their inactive GDP-bound form. Binds to G(i)-alpha and G(o)-alpha, but not to G(s)-alpha. The protein is Regulator of G-protein signaling 5 (Rgs5) of Mus musculus (Mouse).